The sequence spans 298 residues: N-acetylmuramic acid 6-phosphate etherase (298 aa).

Positions Ile55 to Lys218 constitute an SIS domain. The Proton donor role is filled by Glu83. Glu114 is a catalytic residue.

This sequence belongs to the GCKR-like family. MurNAc-6-P etherase subfamily. As to quaternary structure, homodimer.

The catalysed reaction is N-acetyl-D-muramate 6-phosphate + H2O = N-acetyl-D-glucosamine 6-phosphate + (R)-lactate. It participates in amino-sugar metabolism; 1,6-anhydro-N-acetylmuramate degradation. Its pathway is amino-sugar metabolism; N-acetylmuramate degradation. It functions in the pathway cell wall biogenesis; peptidoglycan recycling. In terms of biological role, specifically catalyzes the cleavage of the D-lactyl ether substituent of MurNAc 6-phosphate, producing GlcNAc 6-phosphate and D-lactate. Together with AnmK, is also required for the utilization of anhydro-N-acetylmuramic acid (anhMurNAc) either imported from the medium or derived from its own cell wall murein, and thus plays a role in cell wall recycling. This is N-acetylmuramic acid 6-phosphate etherase from Shigella boydii serotype 18 (strain CDC 3083-94 / BS512).